The sequence spans 349 residues: GTPase Obg (349 aa).

In terms of domain architecture, Obg spans 1-159 (MKFLDQAKVY…LWIWLRLKLI (159 aa)). The region spanning 160-327 (ADAGLIGLPN…VLRALMRVVQ (168 aa)) is the OBG-type G domain. GTP is bound by residues 166–173 (GLPNAGKS), 191–195 (FTTLH), 212–215 (DIPG), 279–282 (SQID), and 308–310 (SSA). Mg(2+)-binding residues include Ser173 and Thr193.

It belongs to the TRAFAC class OBG-HflX-like GTPase superfamily. OBG GTPase family. In terms of assembly, monomer. Mg(2+) is required as a cofactor.

It localises to the cytoplasm. Functionally, an essential GTPase which binds GTP, GDP and possibly (p)ppGpp with moderate affinity, with high nucleotide exchange rates and a fairly low GTP hydrolysis rate. Plays a role in control of the cell cycle, stress response, ribosome biogenesis and in those bacteria that undergo differentiation, in morphogenesis control. This Chelativorans sp. (strain BNC1) protein is GTPase Obg.